The sequence spans 603 residues: Pyruvate oxidase (603 aa).

The interval 1-191 is core; sequence MVMKQTKQTN…WYASANSYQT (191 aa). The segment at 192 to 342 is FAD-binding; sequence PLLPEPDVQA…ILAQVSERES (151 aa). The tract at residues 343–603 is thiamine pyrophosphate binding; it reads TPWWQANLAN…LQHQIGQGGF (261 aa). Mg(2+)-binding residues include Asp447, Asn474, and Gln476.

This sequence belongs to the TPP enzyme family. Homotetramer. FAD serves as cofactor. The cofactor is Mg(2+). Thiamine diphosphate is required as a cofactor.

The catalysed reaction is pyruvate + phosphate + O2 + H(+) = acetyl phosphate + H2O2 + CO2. Important for the aerobic growth. Decarboxylates pyruvate in four steps. The energy released is partially stored in acetyl phosphate. This is Pyruvate oxidase (pox5) from Lactiplantibacillus plantarum (strain ATCC BAA-793 / NCIMB 8826 / WCFS1) (Lactobacillus plantarum).